Consider the following 101-residue polypeptide: Large ribosomal subunit protein uL23 (101 aa).

This sequence belongs to the universal ribosomal protein uL23 family. As to quaternary structure, part of the 50S ribosomal subunit. Contacts protein L29, and trigger factor when it is bound to the ribosome.

Its function is as follows. One of the early assembly proteins it binds 23S rRNA. One of the proteins that surrounds the polypeptide exit tunnel on the outside of the ribosome. Forms the main docking site for trigger factor binding to the ribosome. This is Large ribosomal subunit protein uL23 from Rhodococcus erythropolis (strain PR4 / NBRC 100887).